The primary structure comprises 689 residues: Glycine--tRNA ligase beta subunit (689 aa).

This sequence belongs to the class-II aminoacyl-tRNA synthetase family. In terms of assembly, tetramer of two alpha and two beta subunits.

It localises to the cytoplasm. The catalysed reaction is tRNA(Gly) + glycine + ATP = glycyl-tRNA(Gly) + AMP + diphosphate. The chain is Glycine--tRNA ligase beta subunit from Dictyoglomus turgidum (strain DSM 6724 / Z-1310).